A 433-amino-acid polypeptide reads, in one-letter code: Zuotin (433 aa).

A Phosphoserine modification is found at Ser50. The 73-residue stretch at 98 to 170 (LYAAMGLSKL…RAQYDSCDFV (73 aa)) folds into the J domain. The segment covering 292 to 330 (EEKKEKERRKWEREAGARAEAEAKAKAEAEAKAKAESEA) has biased composition (basic and acidic residues). The interval 292-357 (EEKKEKERRK…KAAKKKNKRA (66 aa)) is disordered.

RAC is a heterodimer of the Hsp70/DnaK-type chaperone SSZ1 and the Hsp40/DnaJ-type chaperone ZUO1. RAC associates with ribosomes via ZUO1.

The protein resides in the cytoplasm. Its function is as follows. Component of the ribosome-associated complex (RAC), a heterodimeric chaperone complex involved in regulation of accurate translation termination and in folding or maintaining nascent polypeptides in a folding-competent state. RAC stimulates the ATPase activity of the ribosome-associated pool of Hsp70-type chaperones SSB1/SSB2 that bind to the nascent polypeptide chain. ZUO1 can act as a J-protein for SSB1/SSB2 only when associated with SSZ1. This Saccharomyces cerevisiae (strain ATCC 204508 / S288c) (Baker's yeast) protein is Zuotin (ZUO1).